The following is a 967-amino-acid chain: RNA polymerase-associated protein RapA (967 aa).

The Helicase ATP-binding domain occupies 163–332 (EVGRRHAPRV…FARLRLLDPD (170 aa)). An ATP-binding site is contributed by 176–183 (DEVGLGKT). The DEAH box signature appears at 278-281 (DEAH). The region spanning 491 to 639 (RVDWLIDFLK…LCAFELTCPG (149 aa)) is the Helicase C-terminal domain.

Belongs to the SNF2/RAD54 helicase family. RapA subfamily. As to quaternary structure, interacts with the RNAP. Has a higher affinity for the core RNAP than for the holoenzyme. Its ATPase activity is stimulated by binding to RNAP.

Functionally, transcription regulator that activates transcription by stimulating RNA polymerase (RNAP) recycling in case of stress conditions such as supercoiled DNA or high salt concentrations. Probably acts by releasing the RNAP, when it is trapped or immobilized on tightly supercoiled DNA. Does not activate transcription on linear DNA. Probably not involved in DNA repair. The protein is RNA polymerase-associated protein RapA of Shewanella amazonensis (strain ATCC BAA-1098 / SB2B).